We begin with the raw amino-acid sequence, 299 residues long: Phosphatidylcholine-sterol acyltransferase (299 aa).

N-linked (GlcNAc...) asparagine glycosylation is found at asparagine 28 and asparagine 184. Cysteine 225 and cysteine 268 form a disulfide bridge. The active-site Charge relay system is aspartate 257. Asparagine 285 carries N-linked (GlcNAc...) asparagine glycosylation. Catalysis depends on histidine 289, which acts as the Charge relay system. Asparagine 296 carries an N-linked (GlcNAc...) asparagine glycan.

This sequence belongs to the AB hydrolase superfamily. Lipase family.

The protein localises to the secreted. It carries out the reaction a sterol + a 1,2-diacyl-sn-glycero-3-phosphocholine = a sterol ester + a 1-acyl-sn-glycero-3-phosphocholine. APOA1 is the most potent activator in plasma. Also activated by APOE, APOC1 and APOA4. In terms of biological role, central enzyme in the extracellular metabolism of plasma lipoproteins. Synthesized mainly in the liver and secreted into plasma where it converts cholesterol and phosphatidylcholines (lecithins) to cholesteryl esters and lysophosphatidylcholines on the surface of high and low density lipoproteins (HDLs and LDLs). The cholesterol ester is then transported back to the liver. Has a preference for plasma 16:0-18:2 or 18:O-18:2 phosphatidylcholines. Also produced in the brain by primary astrocytes, and esterifies free cholesterol on nascent APOE-containing lipoproteins secreted from glia and influences cerebral spinal fluid (CSF) APOE- and APOA1 levels. Together with APOE and the cholesterol transporter ABCA1, plays a key role in the maturation of glial-derived, nascent lipoproteins. Required for remodeling high-density lipoprotein particles into their spherical forms. This Micromys minutus (European harvest mouse) protein is Phosphatidylcholine-sterol acyltransferase (LCAT).